Here is a 158-residue protein sequence, read N- to C-terminus: Pyruvoyl-dependent arginine decarboxylase (158 aa).

Residue serine 44 is modified to Pyruvic acid (Ser).

This sequence belongs to the PdaD family. Requires pyruvate as cofactor.

The enzyme catalyses L-arginine + H(+) = agmatine + CO2. This Pyrococcus horikoshii (strain ATCC 700860 / DSM 12428 / JCM 9974 / NBRC 100139 / OT-3) protein is Pyruvoyl-dependent arginine decarboxylase.